Consider the following 413-residue polypeptide: Bestrophin homolog 13 (413 aa).

The next 4 membrane-spanning stretches (helical) occupy residues 29 to 49 (LIYLILYYSVRVFYLKGIDLI), 72 to 92 (SYTRLIPLTFLLGFYVSNVVA), 236 to 256 (LVYTQVAALATYSFFFFTLFG), and 272 to 292 (LVVPVFTIVQFLFFVGWFKVG).

The protein belongs to the anion channel-forming bestrophin (TC 1.A.46) family. Calcium-sensitive chloride channel subfamily. As to quaternary structure, forms oligomers.

The protein resides in the cell membrane. Forms chloride channels. The sequence is that of Bestrophin homolog 13 (best-13) from Caenorhabditis elegans.